Here is a 274-residue protein sequence, read N- to C-terminus: Ribosomal RNA small subunit methyltransferase A (274 aa).

S-adenosyl-L-methionine contacts are provided by His-15, Leu-17, Gly-42, Glu-64, Asp-89, and Asn-108.

The protein belongs to the class I-like SAM-binding methyltransferase superfamily. rRNA adenine N(6)-methyltransferase family. RsmA subfamily.

Its subcellular location is the cytoplasm. The enzyme catalyses adenosine(1518)/adenosine(1519) in 16S rRNA + 4 S-adenosyl-L-methionine = N(6)-dimethyladenosine(1518)/N(6)-dimethyladenosine(1519) in 16S rRNA + 4 S-adenosyl-L-homocysteine + 4 H(+). Functionally, specifically dimethylates two adjacent adenosines (A1518 and A1519) in the loop of a conserved hairpin near the 3'-end of 16S rRNA in the 30S particle. May play a critical role in biogenesis of 30S subunits. The polypeptide is Ribosomal RNA small subunit methyltransferase A (Prochlorococcus marinus (strain AS9601)).